We begin with the raw amino-acid sequence, 517 residues long: UDP-N-acetylmuramoyl-L-alanyl-D-glutamate--2,6-diaminopimelate ligase (517 aa).

Residues Leu-34 and Ser-36 each coordinate UDP-N-acetyl-alpha-D-muramoyl-L-alanyl-D-glutamate. 122–128 (GTSGKTT) provides a ligand contact to ATP. UDP-N-acetyl-alpha-D-muramoyl-L-alanyl-D-glutamate-binding positions include 164–165 (TT), Ser-191, and Arg-199. Lys-231 carries the post-translational modification N6-carboxylysine. Meso-2,6-diaminopimelate contacts are provided by residues Arg-394, 418-421 (DNPR), Gly-476, and Glu-480. The Meso-diaminopimelate recognition motif motif lies at 418 to 421 (DNPR).

It belongs to the MurCDEF family. MurE subfamily. Requires Mg(2+) as cofactor. In terms of processing, carboxylation is probably crucial for Mg(2+) binding and, consequently, for the gamma-phosphate positioning of ATP.

Its subcellular location is the cytoplasm. It carries out the reaction UDP-N-acetyl-alpha-D-muramoyl-L-alanyl-D-glutamate + meso-2,6-diaminopimelate + ATP = UDP-N-acetyl-alpha-D-muramoyl-L-alanyl-gamma-D-glutamyl-meso-2,6-diaminopimelate + ADP + phosphate + H(+). It participates in cell wall biogenesis; peptidoglycan biosynthesis. In terms of biological role, catalyzes the addition of meso-diaminopimelic acid to the nucleotide precursor UDP-N-acetylmuramoyl-L-alanyl-D-glutamate (UMAG) in the biosynthesis of bacterial cell-wall peptidoglycan. The sequence is that of UDP-N-acetylmuramoyl-L-alanyl-D-glutamate--2,6-diaminopimelate ligase from Corynebacterium glutamicum (strain ATCC 13032 / DSM 20300 / JCM 1318 / BCRC 11384 / CCUG 27702 / LMG 3730 / NBRC 12168 / NCIMB 10025 / NRRL B-2784 / 534).